The following is a 113-amino-acid chain: Small ribosomal subunit protein bS6 (113 aa).

Belongs to the bacterial ribosomal protein bS6 family.

Functionally, binds together with bS18 to 16S ribosomal RNA. This chain is Small ribosomal subunit protein bS6 (rpsF), found in Synechocystis sp. (strain ATCC 27184 / PCC 6803 / Kazusa).